Here is a 122-residue protein sequence, read N- to C-terminus: MITQIDRKAIRMKKHKRVRKSVFGTAERPRLAVFRSLNHIYAQVINDELGVTLATASSLDAEFKAAELAGGNVEGAKKVGELVAKRAQEKGVSKVVFDRGGNIYHGRIAAVAEAAREAGLEF.

This sequence belongs to the universal ribosomal protein uL18 family. In terms of assembly, part of the 50S ribosomal subunit; part of the 5S rRNA/L5/L18/L25 subcomplex. Contacts the 5S and 23S rRNAs.

Functionally, this is one of the proteins that bind and probably mediate the attachment of the 5S RNA into the large ribosomal subunit, where it forms part of the central protuberance. The chain is Large ribosomal subunit protein uL18 from Desulfitobacterium hafniense (strain DSM 10664 / DCB-2).